The following is a 200-amino-acid chain: ATP synthase subunit delta', mitochondrial (200 aa).

A mitochondrion-targeting transit peptide spans 1-21; the sequence is MFRHSSRLLARATTMGWRRPF.

The protein belongs to the ATPase epsilon chain family. F-type ATPases have 2 components, CF(1) - the catalytic core - and CF(0) - the membrane proton channel. CF(1) has five subunits: alpha(3), beta(3), gamma(1), delta(1), epsilon(1). CF(0) has three main subunits: a, b and c.

It localises to the mitochondrion. Its subcellular location is the mitochondrion inner membrane. In terms of biological role, mitochondrial membrane ATP synthase (F(1)F(0) ATP synthase or Complex V) produces ATP from ADP in the presence of a proton gradient across the membrane which is generated by electron transport complexes of the respiratory chain. F-type ATPases consist of two structural domains, F(1) - containing the extramembraneous catalytic core, and F(0) - containing the membrane proton channel, linked together by a central stalk and a peripheral stalk. During catalysis, ATP turnover in the catalytic domain of F(1) is coupled via a rotary mechanism of the central stalk subunits to proton translocation. Part of the complex F(1) domain and of the central stalk which is part of the complex rotary element. Rotation of the central stalk against the surrounding alpha(3)beta(3) subunits leads to hydrolysis of ATP in three separate catalytic sites on the beta subunits. This chain is ATP synthase subunit delta', mitochondrial, found in Ipomoea batatas (Sweet potato).